Reading from the N-terminus, the 139-residue chain is NADH-quinone oxidoreductase subunit A (139 aa).

3 consecutive transmembrane segments (helical) span residues leucine 11–leucine 31, leucine 70–isoleucine 90, and tryptophan 97–leucine 117.

Belongs to the complex I subunit 3 family. As to quaternary structure, NDH-1 is composed of 14 different subunits. Subunits NuoA, H, J, K, L, M, N constitute the membrane sector of the complex.

It localises to the cell inner membrane. It catalyses the reaction a quinone + NADH + 5 H(+)(in) = a quinol + NAD(+) + 4 H(+)(out). In terms of biological role, NDH-1 shuttles electrons from NADH, via FMN and iron-sulfur (Fe-S) centers, to quinones in the respiratory chain. The immediate electron acceptor for the enzyme in this species is believed to be ubiquinone. Couples the redox reaction to proton translocation (for every two electrons transferred, four hydrogen ions are translocated across the cytoplasmic membrane), and thus conserves the redox energy in a proton gradient. This chain is NADH-quinone oxidoreductase subunit A, found in Methylococcus capsulatus (strain ATCC 33009 / NCIMB 11132 / Bath).